The chain runs to 638 residues: 1-deoxy-D-xylulose-5-phosphate synthase (638 aa).

Thiamine diphosphate contacts are provided by residues His-71 and 112-114 (SHA). Asp-144 is a binding site for Mg(2+). Residues 145–146 (GA), Asn-173, Tyr-284, and Glu-365 each bind thiamine diphosphate. Residue Asn-173 coordinates Mg(2+).

It belongs to the transketolase family. DXPS subfamily. In terms of assembly, homodimer. The cofactor is Mg(2+). Requires thiamine diphosphate as cofactor.

The catalysed reaction is D-glyceraldehyde 3-phosphate + pyruvate + H(+) = 1-deoxy-D-xylulose 5-phosphate + CO2. It participates in metabolic intermediate biosynthesis; 1-deoxy-D-xylulose 5-phosphate biosynthesis; 1-deoxy-D-xylulose 5-phosphate from D-glyceraldehyde 3-phosphate and pyruvate: step 1/1. Catalyzes the acyloin condensation reaction between C atoms 2 and 3 of pyruvate and glyceraldehyde 3-phosphate to yield 1-deoxy-D-xylulose-5-phosphate (DXP). The polypeptide is 1-deoxy-D-xylulose-5-phosphate synthase (Mycobacterium bovis (strain ATCC BAA-935 / AF2122/97)).